A 212-amino-acid chain; its full sequence is 3,4-dihydroxy-2-butanone 4-phosphate synthase (212 aa).

Residues 37–38 (RE), Asp-42, 150–154 (RRGHT), and Glu-174 each bind D-ribulose 5-phosphate. Glu-38 is a Mg(2+) binding site. His-153 is a binding site for Mg(2+).

The protein belongs to the DHBP synthase family. In terms of assembly, homodimer. Mg(2+) is required as a cofactor. The cofactor is Mn(2+).

It catalyses the reaction D-ribulose 5-phosphate = (2S)-2-hydroxy-3-oxobutyl phosphate + formate + H(+). It functions in the pathway cofactor biosynthesis; riboflavin biosynthesis; 2-hydroxy-3-oxobutyl phosphate from D-ribulose 5-phosphate: step 1/1. Catalyzes the conversion of D-ribulose 5-phosphate to formate and 3,4-dihydroxy-2-butanone 4-phosphate. The polypeptide is 3,4-dihydroxy-2-butanone 4-phosphate synthase (Shewanella piezotolerans (strain WP3 / JCM 13877)).